A 141-amino-acid polypeptide reads, in one-letter code: Nucleoside diphosphate kinase (141 aa).

Residues Lys-11, Phe-59, Arg-87, Thr-93, Arg-104, and Asn-114 each coordinate ATP. The active-site Pros-phosphohistidine intermediate is His-117.

This sequence belongs to the NDK family. It depends on Mg(2+) as a cofactor.

The protein localises to the cytoplasm. The enzyme catalyses a 2'-deoxyribonucleoside 5'-diphosphate + ATP = a 2'-deoxyribonucleoside 5'-triphosphate + ADP. It catalyses the reaction a ribonucleoside 5'-diphosphate + ATP = a ribonucleoside 5'-triphosphate + ADP. Major role in the synthesis of nucleoside triphosphates other than ATP. The ATP gamma phosphate is transferred to the NDP beta phosphate via a ping-pong mechanism, using a phosphorylated active-site intermediate. The sequence is that of Nucleoside diphosphate kinase from Staphylothermus marinus (strain ATCC 43588 / DSM 3639 / JCM 9404 / F1).